We begin with the raw amino-acid sequence, 257 residues long: 7-carboxy-7-deazaguanine synthase (257 aa).

The interval 1–25 is disordered; that stretch reads MKSVDHPVDVLPAEHSAETPGDARA. Residues 39–41 and arginine 54 each bind substrate; that span reads RQG. In terms of domain architecture, Radical SAM core spans 45–244; that stretch reads LTGTESVFIR…AISRGYQYCD (200 aa). 3 residues coordinate [4Fe-4S] cluster: cysteine 58, cysteine 62, and cysteine 65. Residue threonine 67 coordinates Mg(2+). Threonine 99 provides a ligand contact to substrate. S-adenosyl-L-methionine is bound by residues glycine 101 and 143 to 145; that span reads SPK.

It belongs to the radical SAM superfamily. 7-carboxy-7-deazaguanine synthase family. As to quaternary structure, homodimer. It depends on [4Fe-4S] cluster as a cofactor. The cofactor is S-adenosyl-L-methionine. Requires Mg(2+) as cofactor.

It catalyses the reaction 6-carboxy-5,6,7,8-tetrahydropterin + H(+) = 7-carboxy-7-deazaguanine + NH4(+). The protein operates within purine metabolism; 7-cyano-7-deazaguanine biosynthesis. In terms of biological role, catalyzes the complex heterocyclic radical-mediated conversion of 6-carboxy-5,6,7,8-tetrahydropterin (CPH4) to 7-carboxy-7-deazaguanine (CDG), a step common to the biosynthetic pathways of all 7-deazapurine-containing compounds. The polypeptide is 7-carboxy-7-deazaguanine synthase (Rhodopirellula baltica (strain DSM 10527 / NCIMB 13988 / SH1)).